Consider the following 220-residue polypeptide: Vesicle-associated membrane protein 7 (220 aa).

Residue A2 is modified to N-acetylalanine. At 2-188 (AILFAVVARG…ARAMCMKNLK (187 aa)) the chain is on the cytoplasmic side. The region spanning 7-110 (VVARGTTILA…AMNSEFSSVL (104 aa)) is the Longin domain. The v-SNARE coiled-coil homology domain occupies 125–185 (KVMETQAQVD…RNLARAMCMK (61 aa)). 2 positions are modified to phosphoserine: S167 and S168. Residues 189–209 (LTIIIIIISVVFIYIIVSPLC) traverse the membrane as a helical; Anchor for type IV membrane protein segment. Over 210–220 (GGFTWPNCVKK) the chain is Vesicular.

Belongs to the synaptobrevin family. Component of the SNARE complex composed of STX4, SNAP23 and VAMP7 that binds SYT7 during lysosomal exocytosis. Component of the SNARE complex composed of STX7, STX8, VAMP7 and VTI1B that is required for heterotypic fusion of late endosomes with lysosomes. May interact with STX17. Interacts with PICALM. Interacts with RAB21.

Its subcellular location is the cytoplasmic vesicle. The protein localises to the secretory vesicle membrane. It is found in the golgi apparatus. It localises to the trans-Golgi network membrane. The protein resides in the late endosome membrane. Its subcellular location is the lysosome membrane. The protein localises to the endoplasmic reticulum membrane. It is found in the phagosome membrane. It localises to the synapse. The protein resides in the synaptosome. Functionally, involved in the targeting and/or fusion of transport vesicles to their target membrane during transport of proteins from the early endosome to the lysosome. Required for heterotypic fusion of late endosomes with lysosomes and homotypic lysosomal fusion. Required for calcium regulated lysosomal exocytosis. Involved in the export of chylomicrons from the endoplasmic reticulum to the cis Golgi. Required for exocytosis of mediators during eosinophil and neutrophil degranulation, and target cell killing by natural killer cells. Required for focal exocytosis of late endocytic vesicles during phagosome formation. This chain is Vesicle-associated membrane protein 7 (VAMP7), found in Bos taurus (Bovine).